The chain runs to 843 residues: Elongation factor 2 (843 aa).

A tr-type G domain is found at His-17 to Ala-253. GTP is bound at residue Ala-26–Ser-33. A phosphothreonine mark is found at Thr-57 and Thr-59. Asn-158 to Asp-161 lines the GTP pocket. At His-700 the chain carries Diphthamide.

The protein belongs to the TRAFAC class translation factor GTPase superfamily. Classic translation factor GTPase family. EF-G/EF-2 subfamily. Post-translationally, phosphorylation by EF-2 kinase completely inactivates EF-2.

It localises to the cytoplasm. It catalyses the reaction GTP + H2O = GDP + phosphate + H(+). Catalyzes the GTP-dependent ribosomal translocation step during translation elongation. During this step, the ribosome changes from the pre-translocational (PRE) to the post-translocational (POST) state as the newly formed A-site-bound peptidyl-tRNA and P-site-bound deacylated tRNA move to the P and E sites, respectively. Catalyzes the coordinated movement of the two tRNA molecules, the mRNA and conformational changes in the ribosome. The sequence is that of Elongation factor 2 from Beta vulgaris (Sugar beet).